Reading from the N-terminus, the 593-residue chain is Kelch-like protein 2 (593 aa).

The disordered stretch occupies residues 1 to 28 (METPPLPPACTKQGHQKPLDSKDDNTEK). Basic and acidic residues predominate over residues 17 to 28 (KPLDSKDDNTEK). A BTB domain is found at 56 to 123 (CDVTIVAEDM…VYTAEIQVTE (68 aa)). Kelch repeat units lie at residues 308–353 (LMVV…YMAG), 354–400 (LVFA…VLNG), 402–447 (LYAV…VVGG), 449–496 (LYAV…VLNN), 497–543 (LLYA…AVNG), and 545–591 (LYVV…VIDK).

As to quaternary structure, component of the BCR(KLHL2) E3 ubiquitin ligase complex, at least composed of CUL3 and KLHL2 and RBX1. Binds actin. Interacts with KLHL12. Interacts (via N-terminus) with FYN (via SH3 domain). As to expression, ubiquitous. Detected throughout the brain.

Its subcellular location is the cytoplasm. It localises to the cytoskeleton. It is found in the cell projection. The protein resides in the ruffle. The protein localises to the lamellipodium. Its subcellular location is the cytosol. Its pathway is protein modification; protein ubiquitination. Substrate-specific adapter of a BCR (BTB-CUL3-RBX1) E3 ubiquitin ligase complex that mediates the ubiquitination of target proteins, such as NPTXR, WNK1, WNK3 and WNK4, leading most often to their proteasomal degradation. The BCR(KLHL2) complex catalyzes ubiquitination and degradation of NPTXR. Responsible for degradative ubiquitination of the WNK kinases WNK1, WNK3 and WNK4. Plays a role in the reorganization of the actin cytoskeleton. Promotes growth of cell projections in oligodendrocyte precursors. The sequence is that of Kelch-like protein 2 from Homo sapiens (Human).